Reading from the N-terminus, the 203-residue chain is Urease accessory protein UreG (203 aa).

14-21 (GPVGAGKT) contributes to the GTP binding site.

The protein belongs to the SIMIBI class G3E GTPase family. UreG subfamily. In terms of assembly, homodimer. UreD, UreF and UreG form a complex that acts as a GTP-hydrolysis-dependent molecular chaperone, activating the urease apoprotein by helping to assemble the nickel containing metallocenter of UreC. The UreE protein probably delivers the nickel.

The protein resides in the cytoplasm. In terms of biological role, facilitates the functional incorporation of the urease nickel metallocenter. This process requires GTP hydrolysis, probably effectuated by UreG. In Jannaschia sp. (strain CCS1), this protein is Urease accessory protein UreG.